The sequence spans 465 residues: Ribulose bisphosphate carboxylase large chain (465 aa).

K4 carries the N6,N6,N6-trimethyllysine modification. Substrate is bound by residues N113 and T163. The Proton acceptor role is filled by K165. K167 is a binding site for substrate. Mg(2+) contacts are provided by K191, D193, and E194. K191 bears the N6-carboxylysine mark. Residue H284 is the Proton acceptor of the active site. Substrate-binding residues include R285, H317, and S369.

Belongs to the RuBisCO large chain family. Type I subfamily. In terms of assembly, heterohexadecamer of 8 large chains and 8 small chains; disulfide-linked. The disulfide link is formed within the large subunit homodimers. Mg(2+) is required as a cofactor. The disulfide bond which can form in the large chain dimeric partners within the hexadecamer appears to be associated with oxidative stress and protein turnover.

It localises to the plastid. Its subcellular location is the chloroplast. The catalysed reaction is 2 (2R)-3-phosphoglycerate + 2 H(+) = D-ribulose 1,5-bisphosphate + CO2 + H2O. It catalyses the reaction D-ribulose 1,5-bisphosphate + O2 = 2-phosphoglycolate + (2R)-3-phosphoglycerate + 2 H(+). In terms of biological role, ruBisCO catalyzes two reactions: the carboxylation of D-ribulose 1,5-bisphosphate, the primary event in carbon dioxide fixation, as well as the oxidative fragmentation of the pentose substrate in the photorespiration process. Both reactions occur simultaneously and in competition at the same active site. The polypeptide is Ribulose bisphosphate carboxylase large chain (Cassia fistula (Golden shower tree)).